The following is a 598-amino-acid chain: Aspartate--tRNA(Asp/Asn) ligase (598 aa).

Glu-175 contributes to the L-aspartate binding site. An aspartate region spans residues 199–202; it reads QQFK. L-aspartate contacts are provided by Arg-221 and His-452. An ATP-binding site is contributed by 221-223; that stretch reads RDE. Glu-486 contributes to the ATP binding site. Arg-493 provides a ligand contact to L-aspartate. 538 to 541 lines the ATP pocket; sequence GVDR.

This sequence belongs to the class-II aminoacyl-tRNA synthetase family. Type 1 subfamily. As to quaternary structure, homodimer.

It is found in the cytoplasm. It carries out the reaction tRNA(Asx) + L-aspartate + ATP = L-aspartyl-tRNA(Asx) + AMP + diphosphate. Aspartyl-tRNA synthetase with relaxed tRNA specificity since it is able to aspartylate not only its cognate tRNA(Asp) but also tRNA(Asn). Reaction proceeds in two steps: L-aspartate is first activated by ATP to form Asp-AMP and then transferred to the acceptor end of tRNA(Asp/Asn). This Gluconobacter oxydans (strain 621H) (Gluconobacter suboxydans) protein is Aspartate--tRNA(Asp/Asn) ligase.